The chain runs to 362 residues: Alcohol dehydrogenase 13 (362 aa).

The Zn(2+) site is built by C51, H73, C104, C107, C110, C118, and C168. H73 contacts substrate. NAD(+) is bound by residues 193 to 198 (GLGGLG) and 280 to 282 (VGA).

Belongs to the zinc-containing alcohol dehydrogenase family. Class-III subfamily. Homodimer. Zn(2+) is required as a cofactor.

This is Alcohol dehydrogenase 13 from Catharanthus roseus (Madagascar periwinkle).